A 156-amino-acid polypeptide reads, in one-letter code: Putative pre-16S rRNA nuclease (156 aa).

Belongs to the YqgF nuclease family.

Its subcellular location is the cytoplasm. Its function is as follows. Could be a nuclease involved in processing of the 5'-end of pre-16S rRNA. In Rickettsia typhi (strain ATCC VR-144 / Wilmington), this protein is Putative pre-16S rRNA nuclease.